We begin with the raw amino-acid sequence, 304 residues long: MKLNLAVKIGQLDMINPVTTASGTFGYGQEYSPYVDLNQLGAIVVKGTTLEPREGNPTPRLVETPSGILNSIGLQNSGVDYLLEHYVPFFKKLQTNVIVNISGNTAEEYGQLAARLDEADGIAALEVNISCPNVKKGGMAFGGDFRTAAEVTKVVKNSTALPVIVKLSPNVTDIAEIARAVEGAGADGLSVINTLLGMAIDVRKRKPVLGNTMGGLSGPAVKPVALRAVWQVYKAVHIPIIGMGGIMNATDALEFILAGAQAVSVGTANFVNPYATKEIIQGMEKYLMENGIGDINELVGAAHL.

Residues S22 and K46–G47 each bind FMN. Substrate-binding positions include K46 and N70–L74. FMN-binding residues include N100 and N128. Substrate is bound at residue N128. The Nucleophile role is filled by C131. Residues K166 and I192 each coordinate FMN. N193 to T194 contributes to the substrate binding site. FMN-binding positions include G218, G244–G245, and G266–T267.

This sequence belongs to the dihydroorotate dehydrogenase family. Type 1 subfamily. In terms of assembly, heterotetramer of 2 PyrK and 2 PyrD type B subunits. However, the metal reductase complex seems to be composed of a heterooctamer of 4 PyrK and 4 PyrD subunits. FMN serves as cofactor.

The protein resides in the cytoplasm. It catalyses the reaction (S)-dihydroorotate + NAD(+) = orotate + NADH + H(+). The protein operates within pyrimidine metabolism; UMP biosynthesis via de novo pathway; orotate from (S)-dihydroorotate (NAD(+) route): step 1/1. In terms of biological role, catalyzes the conversion of dihydroorotate to orotate with NAD(+) as electron acceptor. Together with PyrK, also forms a metal reductase complex able to reduce Fe(III)-chelates to Fe(II)-chelates, as well as soluble Cr(VI) and U(VI), using NADH as electron donor. To a lesser extent, can also use NADPH as an electron donor. Is unable to reduce riboflavin and FMN with NADH as electron donor. May have an in vivo role in metal reduction in D.reducens, which is an organism capable of reducing contaminant heavy metals and radionuclides. This chain is Dihydroorotate dehydrogenase B (NAD(+)), catalytic subunit (pyrD), found in Desulforamulus reducens (strain ATCC BAA-1160 / DSM 100696 / MI-1) (Desulfotomaculum reducens).